The following is a 176-amino-acid chain: Disulfide bond formation protein B (176 aa).

Residues 1–14 (MLRFLNQCSQGRGA) are Cytoplasmic-facing. A helical transmembrane segment spans residues 15–31 (WLLMAFTALALELTALW). The Periplasmic segment spans residues 32–49 (FQHVMLLKPCVLCIYERC). A disulfide bond links C41 and C44. The helical transmembrane segment at 50–65 (ALFGVLGAALIGAIAP) threads the bilayer. The Cytoplasmic portion of the chain corresponds to 66 to 71 (KTPLRY). The chain crosses the membrane as a helical span at residues 72 to 89 (VAMVIWLYSAFRGVQLTY). The Periplasmic segment spans residues 90-144 (EHTMLQLYPSPFATCDFMVRFPEWLPLDKWVPQVFVASGDCAERQWDFLGLEMPQ). The cysteines at positions 104 and 130 are disulfide-linked. The helical transmembrane segment at 145-163 (WLLGIFIAYLIVAVLVMIS) threads the bilayer. At 164–176 (QPFKAKKRDLFGR) the chain is on the cytoplasmic side.

Belongs to the DsbB family.

Its subcellular location is the cell inner membrane. Required for disulfide bond formation in some periplasmic proteins. Acts by oxidizing the DsbA protein. The protein is Disulfide bond formation protein B of Shigella sonnei (strain Ss046).